An 83-amino-acid polypeptide reads, in one-letter code: Alpha-neurotoxin NTX-3 (83 aa).

Residues methionine 1 to threonine 21 form the signal peptide. 4 cysteine pairs are disulfide-bonded: cysteine 24–cysteine 45, cysteine 38–cysteine 62, cysteine 64–cysteine 75, and cysteine 76–cysteine 81.

It belongs to the three-finger toxin family. Short-chain subfamily. Type I alpha-neurotoxin sub-subfamily. In terms of tissue distribution, expressed by the venom gland.

The protein resides in the secreted. In terms of biological role, binds to muscle nicotinic acetylcholine receptor (nAChR) and inhibit acetylcholine from binding to the receptor, thereby impairing neuromuscular transmission. The polypeptide is Alpha-neurotoxin NTX-3 (Naja sputatrix (Malayan spitting cobra)).